We begin with the raw amino-acid sequence, 309 residues long: NADH-cytochrome b5 reductase 1 (309 aa).

The chain crosses the membrane as a helical span at residues 30–50 (FVPYAVALTAILAGLKLFTGG). The FAD-binding FR-type domain maps to 60-165 (TEFQEFVLKE…RGPKGAMVYT (106 aa)). FAD contacts are provided by residues 145 to 160 (TTLKIGDTMKVRGPKG) and 171 to 208 (HIGMIAGGTGITPMLQIIKAVIRNRPRNGGNDTTKLDL).

This sequence belongs to the flavoprotein pyridine nucleotide cytochrome reductase family. Monomer. Component of the 2-(3-amino-3-carboxypropyl)histidine synthase complex composed of dph1, dph2, dph3 and a NADH-dependent reductase, predominantly cbr1. Requires FAD as cofactor.

The protein localises to the mitochondrion outer membrane. It carries out the reaction 2 Fe(III)-[cytochrome b5] + NADH = 2 Fe(II)-[cytochrome b5] + NAD(+) + H(+). The enzyme catalyses 2 Fe(3+)-[Dph3] + NADH = 2 Fe(2+)-[Dph3] + NAD(+) + H(+). The protein operates within protein modification; peptidyl-diphthamide biosynthesis. Its function is as follows. NADH-dependent reductase for dph3 and cytochrome b5. Required for the first step of diphthamide biosynthesis, a post-translational modification of histidine which occurs in elongation factor 2. Dph1 and dph2 transfer a 3-amino-3-carboxypropyl (ACP) group from S-adenosyl-L-methionine (SAM) to a histidine residue, the reaction is assisted by a reduction system comprising dph3 and a NADH-dependent reductase, predominantly cbr1. By reducing dph3, also involved in the formation of the tRNA wobble base modification mcm5s 2U (5-methoxycarbonylmethyl-2-thiouridine), mediated by the elongator complex. The cytochrome b5/NADH cytochrome b5 reductase electron transfer system supports the catalytic activity of several sterol biosynthetic enzymes. The sequence is that of NADH-cytochrome b5 reductase 1 (cbr1) from Neosartorya fischeri (strain ATCC 1020 / DSM 3700 / CBS 544.65 / FGSC A1164 / JCM 1740 / NRRL 181 / WB 181) (Aspergillus fischerianus).